The sequence spans 816 residues: Probable disease resistance protein At4g33300 (816 aa).

The 149-residue stretch at 1–149 (MAITDFFAGE…SLDRVIQQVG (149 aa)) folds into the RPW8 domain. A coiled-coil region spans residues 95–111 (TLARKMEKLEKTISNFL). The NB-ARC domain maps to 191 to 443 (VKKMMFESQG…LDVLINIWIE (253 aa)). Residue 207–214 (GMGGVGKT) participates in ATP binding. Residues 399–415 (SRLLRQMEASLDNLDQT) adopt a coiled-coil conformation. 4 LRR repeats span residues 681–704 (SLSCLSITNCPRLGELPKNLSKLQ), 705–727 (ALEILRLYACPELKTLPGEICEL), 729–751 (GLKYLDISQCVSLSCLPEEIGKL), and 753–774 (KLEKIDMRECCFSDRPSSAVSL).

It belongs to the disease resistance NB-LRR family.

Probable disease resistance protein. This Arabidopsis thaliana (Mouse-ear cress) protein is Probable disease resistance protein At4g33300.